The following is a 232-amino-acid chain: GFP-like non-fluorescent chromoprotein FP595 (232 aa).

Positions Met-63–Gly-65 form a cross-link, 2-iminomethyl-5-imidazolinone (Met-Gly). Tyr-64 carries the post-translational modification (E)-2,3-didehydrotyrosine.

The protein belongs to the GFP family. In terms of processing, contains a chromophore consisting of modified amino acid residues. The chromophore is formed by autocatalytic backbone condensation between Xaa-N and Gly-(N+2), oxidation of Tyr-(N+1) to didehydrotyrosine, and formation of a double bond to the alpha-amino nitrogen of residue Tyr-(N+1). Maturation of the chromophore requires nothing other than molecular oxygen. As to expression, tentacle tips.

In terms of biological role, pigment protein that is intensely purple in color. The protein is GFP-like non-fluorescent chromoprotein FP595 of Anemonia sulcata (Mediterranean snakelocks sea anemone).